The chain runs to 392 residues: RNA-binding motif protein, X-linked-like-2 (392 aa).

The RRM domain occupies 8–86 (GKLFIGGLNL…KAIKVAQATK (79 aa)). Basic and acidic residues predominate over residues 67–78 (RDMNGKSLDGKA). The disordered stretch occupies residues 67–392 (RDMNGKSLDG…LERGGGRSRY (326 aa)). Positions 150-163 (RGPPPRRVGPPPKR) are enriched in pro residues. Composition is skewed to basic and acidic residues over residues 194–229 (PRREPLPPRRDPYLGPRDEGYSSRDGYSSRDYREPR) and 238–283 (YTHR…REPF). Low complexity predominate over residues 319 to 331 (YSGGRDSYSSSYG). A compositionally biased stretch (basic and acidic residues) spans 381 to 392 (GRLERGGGRSRY).

In terms of tissue distribution, expressed predominantly in spermatocytes and less in round spermatids (at protein level). Expressed in germ cells.

Its subcellular location is the nucleus. In Homo sapiens (Human), this protein is RNA-binding motif protein, X-linked-like-2 (RBMXL2).